The primary structure comprises 193 residues: Orotate phosphoribosyltransferase (193 aa).

114 to 122 (EDVITTGGS) lines the 5-phospho-alpha-D-ribose 1-diphosphate pocket. 2 residues coordinate orotate: T118 and R146.

Belongs to the purine/pyrimidine phosphoribosyltransferase family. PyrE subfamily. In terms of assembly, homodimer. It depends on Mg(2+) as a cofactor.

The enzyme catalyses orotidine 5'-phosphate + diphosphate = orotate + 5-phospho-alpha-D-ribose 1-diphosphate. It functions in the pathway pyrimidine metabolism; UMP biosynthesis via de novo pathway; UMP from orotate: step 1/2. Catalyzes the transfer of a ribosyl phosphate group from 5-phosphoribose 1-diphosphate to orotate, leading to the formation of orotidine monophosphate (OMP). This chain is Orotate phosphoribosyltransferase, found in Chlorobium phaeobacteroides (strain BS1).